We begin with the raw amino-acid sequence, 574 residues long: MEYYYYIIIAAVGGFAILTFIIIVVLRLKKSQKMREPLLPKEKGNVFVYKRDTQVQEKEEQVMMNARLYLRSTIYSLQDKIPKFGSRSDKVYFGVLGNSLNKLENDRIMAMVPVSKHWPIPLNSEAGRTTFRTIIKSLEIHPFISVPLLVDFIPEKHVAVSVRPFYADRGSLRDFIHKSKPKMPYADKYDTHLQLNEKIVSKFGRQILEALIFLKNHNFPYFHLNSANVLVDDQICLISDYENSFLGLEPRFSDFIRQHNEKIDPDVLSFGLVLFEMACGYEMENPHSVDISIPAHCYPEVRKVLEAIFKPFYGTPITLEELSKMDFFSYHKFKNLPLHRLTYTSRERDMMDAVIKLNKTFLSTNSKPNSKDLSQPKLKDLKKQKKRKQLVFTQSFEPIKMESQNGGGAAGGEYGNEGGYAISTSSSLPSNFLANVKPANSTSYSLLSNTTTNTTNTSTSSSLNSSFNSNVSTSYSNATTTTNTTSASSVSPPISSPPPPPPPPPPSKSSGPPPPPPPPPKSSGPPPPPPPKSSPPPPADGSRKGLLSSIESFSSSKLKKTKTVDKSGPLLKKS.

Residues 6–26 (YIIIAAVGGFAILTFIIIVVL) traverse the membrane as a helical segment. The Protein kinase domain maps to 166–346 (YADRGSLRDF…PLHRLTYTSR (181 aa)). N358 is a glycosylation site (N-linked (GlcNAc...) asparagine). The interval 366–386 (SKPNSKDLSQPKLKDLKKQKK) is disordered. N-linked (GlcNAc...) asparagine glycans are attached at residues N440, N449, N453, N456, N464, N470, N477, and N483. Residues 450–493 (TTTNTTNTSTSSSLNSSFNSNVSTSYSNATTTTNTTSASSVSPP) show a composition bias toward low complexity. The disordered stretch occupies residues 450 to 574 (TTTNTTNTST…DKSGPLLKKS (125 aa)). Residues 494–539 (ISSPPPPPPPPPPSKSSGPPPPPPPPPKSSGPPPPPPPKSSPPPPA) show a composition bias toward pro residues. A compositionally biased stretch (low complexity) spans 546–556 (LLSSIESFSSS).

Belongs to the protein kinase superfamily. Ser/Thr protein kinase family.

It is found in the membrane. This chain is Probable inactive serine/threonine-protein kinase slob2 (slob2), found in Dictyostelium discoideum (Social amoeba).